A 400-amino-acid polypeptide reads, in one-letter code: Mu-type opioid receptor (400 aa).

Residues 1–68 (MDSSAAPTNA…CPPTGSPSMI (68 aa)) are Extracellular-facing. 5 N-linked (GlcNAc...) asparagine glycosylation sites follow: Asn9, Asn12, Asn33, Asn40, and Asn48. The helical transmembrane segment at 69–93 (TAITIMALYSIVCVVGLFGNFLVMY) threads the bilayer. Residues 94 to 106 (VIVRYTKMKTATN) are Cytoplasmic-facing. The chain crosses the membrane as a helical span at residues 107–131 (IYIFNLALADALATSTLPFQSVNYL). Topologically, residues 132-142 (MGTWPFGTILC) are extracellular. Cys142 and Cys219 are oxidised to a cystine. A helical transmembrane segment spans residues 143–165 (KIVISIDYYNMFTSIFTLCTMSV). Residues 166–185 (DRYIAVCHPVKALDFRTPRN) are Cytoplasmic-facing. The residue at position 168 (Tyr168) is a Phosphotyrosine. Residues 186-207 (AKIINVCNWILSSAIGLPVMFM) traverse the membrane as a helical segment. Topologically, residues 208-230 (ATTKYRQGSIDCTLTFSHPTWYW) are extracellular. The chain crosses the membrane as a helical span at residues 231-255 (ENLLKICVFIFAFIMPVLIITVCYG). Topologically, residues 256 to 279 (LMILRLKSVRMLSGSKEKDRNLRR) are cytoplasmic. A helical transmembrane segment spans residues 280–306 (ITRMVLVVVAVFIVCWTPIHIYVIIKA). At 307–314 (LVTIPETT) the chain is on the extracellular side. The helical transmembrane segment at 315–338 (FQTVSWHFCIALGYTNSCLNPVLY) threads the bilayer. The short motif at 334–338 (NPVLY) is the NPxxY; plays a role in stabilizing the activated conformation of the receptor element. At 339–400 (AFLDENFKRC…NLEAETAPLP (62 aa)) the chain is on the cytoplasmic side. Cys353 carries the S-palmitoyl cysteine lipid modification. Ser365 is modified (phosphoserine). Phosphothreonine is present on Thr372. At Ser377 the chain carries Phosphoserine. A Phosphothreonine modification is found at Thr396.

This sequence belongs to the G-protein coupled receptor 1 family. As to quaternary structure, forms homooligomers and heterooligomers with other GPCRs, such as OPRD1, OPRK1, OPRL1, NPFFR2, ADRA2A, SSTR2, CNR1 and CCR5 (probably in dimeric forms). Interacts with heterotrimeric G proteins; interaction with a heterotrimeric complex containing GNAI1, GNB1 and GNG2 stabilizes the active conformation of the receptor and increases its affinity for endomorphin-2, the synthetic opioid peptide DAMGO and for morphinan agonists. Interacts with PPL; the interaction disrupts agonist-mediated G-protein activation. Interacts (via C-terminus) with DNAJB4 (via C-terminus). Interacts with calmodulin; the interaction inhibits the constitutive activity of OPRM1; it abolishes basal and attenuates agonist-stimulated G-protein coupling. Interacts with FLNA, PLD2, RANBP9 and WLS and GPM6A. Interacts with RTP4. Interacts with SYP and GNAS. Interacts with RGS9, RGS17, RGS20, RGS4, PPP1R9B and HINT1. Phosphorylated. Differentially phosphorylated in basal and agonist-induced conditions. Agonist-mediated phosphorylation modulates receptor internalization. Phosphorylated by GRK2 in a agonist-dependent manner. Phosphorylation at Tyr-168 requires receptor activation, is dependent on non-receptor protein tyrosine kinase Src and results in a decrease in agonist efficacy by reducing G-protein coupling efficiency. Phosphorylated on tyrosine residues; the phosphorylation is involved in agonist-induced G-protein-independent receptor down-regulation. Phosphorylation at Ser-377 is involved in G-protein-dependent but not beta-arrestin-dependent activation of the ERK pathway. In terms of processing, ubiquitinated. A basal ubiquitination seems not to be related to degradation. Ubiquitination is increased upon formation of OPRM1:OPRD1 oligomers leading to proteasomal degradation; the ubiquitination is diminished by RTP4. Expressed in brain. Isoform 16 and isoform 17 are detected in brain.

The protein localises to the cell membrane. It is found in the cell projection. Its subcellular location is the axon. It localises to the perikaryon. The protein resides in the dendrite. The protein localises to the endosome. It is found in the cytoplasm. In terms of biological role, receptor for endogenous opioids such as beta-endorphin and endomorphin. Receptor for natural and synthetic opioids including morphine, heroin, DAMGO, fentanyl, etorphine, buprenorphin and methadone. Also activated by enkephalin peptides, such as Met-enkephalin or Met-enkephalin-Arg-Phe, with higher affinity for Met-enkephalin-Arg-Phe. Agonist binding to the receptor induces coupling to an inactive GDP-bound heterotrimeric G-protein complex and subsequent exchange of GDP for GTP in the G-protein alpha subunit leading to dissociation of the G-protein complex with the free GTP-bound G-protein alpha and the G-protein beta-gamma dimer activating downstream cellular effectors. The agonist- and cell type-specific activity is predominantly coupled to pertussis toxin-sensitive G(i) and G(o) G alpha proteins, GNAI1, GNAI2, GNAI3 and GNAO1 isoforms Alpha-1 and Alpha-2, and to a lesser extent to pertussis toxin-insensitive G alpha proteins GNAZ and GNA15. They mediate an array of downstream cellular responses, including inhibition of adenylate cyclase activity and both N-type and L-type calcium channels, activation of inward rectifying potassium channels, mitogen-activated protein kinase (MAPK), phospholipase C (PLC), phosphoinositide/protein kinase (PKC), phosphoinositide 3-kinase (PI3K) and regulation of NF-kappa-B. Also couples to adenylate cyclase stimulatory G alpha proteins. The selective temporal coupling to G-proteins and subsequent signaling can be regulated by RGSZ proteins, such as RGS9, RGS17 and RGS4. Phosphorylation by members of the GPRK subfamily of Ser/Thr protein kinases and association with beta-arrestins is involved in short-term receptor desensitization. Beta-arrestins associate with the GPRK-phosphorylated receptor and uncouple it from the G-protein thus terminating signal transduction. The phosphorylated receptor is internalized through endocytosis via clathrin-coated pits which involves beta-arrestins. The activation of the ERK pathway occurs either in a G-protein-dependent or a beta-arrestin-dependent manner and is regulated by agonist-specific receptor phosphorylation. Acts as a class A G-protein coupled receptor (GPCR) which dissociates from beta-arrestin at or near the plasma membrane and undergoes rapid recycling. Receptor down-regulation pathways are varying with the agonist and occur dependent or independent of G-protein coupling. Endogenous ligands induce rapid desensitization, endocytosis and recycling. Heterooligomerization with other GPCRs can modulate agonist binding, signaling and trafficking properties. Couples to GNAS and is proposed to be involved in excitatory effects. Functionally, does not bind agonists but may act through oligomerization with binding-competent OPRM1 isoforms and reduce their ligand binding activity. In Homo sapiens (Human), this protein is Mu-type opioid receptor (OPRM1).